A 384-amino-acid polypeptide reads, in one-letter code: Methylthioribose-1-phosphate isomerase (384 aa).

Catalysis depends on Asp-255, which acts as the Proton donor.

This sequence belongs to the eIF-2B alpha/beta/delta subunits family. MtnA subfamily.

Its subcellular location is the cytoplasm. It is found in the nucleus. It carries out the reaction 5-(methylsulfanyl)-alpha-D-ribose 1-phosphate = 5-(methylsulfanyl)-D-ribulose 1-phosphate. It functions in the pathway amino-acid biosynthesis; L-methionine biosynthesis via salvage pathway; L-methionine from S-methyl-5-thio-alpha-D-ribose 1-phosphate: step 1/6. In terms of biological role, catalyzes the interconversion of methylthioribose-1-phosphate (MTR-1-P) into methylthioribulose-1-phosphate (MTRu-1-P). In Talaromyces marneffei (strain ATCC 18224 / CBS 334.59 / QM 7333) (Penicillium marneffei), this protein is Methylthioribose-1-phosphate isomerase (mri1).